The primary structure comprises 485 residues: Zinc finger protein 639 (485 aa).

The span at 1 to 14 (MNEYPKKRKRKTLH) shows a compositional bias: basic residues. The segment at 1–20 (MNEYPKKRKRKTLHPSRYSD) is disordered. S60 is modified (phosphoserine). K76 is covalently cross-linked (Glycyl lysine isopeptide (Lys-Gly) (interchain with G-Cter in SUMO2)). Residue S88 is modified to Phosphoserine. Residues K177, K181, and K226 each participate in a glycyl lysine isopeptide (Lys-Gly) (interchain with G-Cter in SUMO2) cross-link. C2H2-type zinc fingers lie at residues 204–227 (YKCELCEFNSKYFSDLKQHMILKH), 233–255 (NVCRVCKESFSTNMLLIEHAKLH), 260–283 (YICKYCDYKTVIFENLSQHIADTH), 289–311 (YWCEQCDVQFSSSSELYLHFQEH), 374–397 (FVCQVCGFRSRLHTNVNRHVAIEH), 403–425 (HVCDDCGKGFSSMLEYCKHLNSH), 431–454 (YLCQYCEYSTGQIEDLKIHLDFKH), and 460–482 (HKCSDCLMRFGNERELISHLPVH). Residues 371-455 (KNFFVCQVCG…LKIHLDFKHS (85 aa)) are interaction with CTNNA2.

Belongs to the krueppel C2H2-type zinc-finger protein family. In terms of assembly, interacts with CTNNA2.

Its subcellular location is the nucleus. Functionally, binds DNA and may function as a transcriptional repressor. The chain is Zinc finger protein 639 (ZNF639) from Homo sapiens (Human).